An 80-amino-acid chain; its full sequence is Translational regulator CsrA (80 aa).

This sequence belongs to the CsrA/RsmA family. Homodimer; the beta-strands of each monomer intercalate to form a hydrophobic core, while the alpha-helices form wings that extend away from the core.

Its subcellular location is the cytoplasm. In terms of biological role, a translational regulator that binds mRNA to regulate translation initiation and/or mRNA stability. Usually binds in the 5'-UTR at or near the Shine-Dalgarno sequence preventing ribosome-binding, thus repressing translation. Its main target seems to be the major flagellin gene, while its function is anatagonized by FliW. The protein is Translational regulator CsrA of Desulforamulus reducens (strain ATCC BAA-1160 / DSM 100696 / MI-1) (Desulfotomaculum reducens).